A 98-amino-acid chain; its full sequence is C-C motif chemokine 19 (98 aa).

Positions 1–21 (MALLLALSLLVLWTSPAPTLS) are cleaved as a signal peptide. 2 disulfides stabilise this stretch: cysteine 29-cysteine 55 and cysteine 30-cysteine 71.

Belongs to the intercrine beta (chemokine CC) family. Interacts with TNFAIP6 (via Link domain). In terms of tissue distribution, expressed at high levels in the lymph nodes, thymus and appendix. Intermediate levels seen in colon and trachea, while low levels found in spleen, small intestine, lung, kidney and stomach.

It is found in the secreted. In terms of biological role, may play a role not only in inflammatory and immunological responses but also in normal lymphocyte recirculation and homing. May play an important role in trafficking of T-cells in thymus, and T-cell and B-cell migration to secondary lymphoid organs. Binds to chemokine receptor CCR7. Recombinant CCL19 shows potent chemotactic activity for T-cells and B-cells but not for granulocytes and monocytes. Binds to atypical chemokine receptor ACKR4 and mediates the recruitment of beta-arrestin (ARRB1/2) to ACKR4. This Homo sapiens (Human) protein is C-C motif chemokine 19 (CCL19).